Here is a 263-residue protein sequence, read N- to C-terminus: Leukocyte-associated immunoglobulin-like receptor 1 (263 aa).

Residues Met1 to Thr21 form the signal peptide. The Ig-like C2-type domain occupies Ser27–Gln112. An intrachain disulfide couples Cys49 to Cys96. N-linked (GlcNAc...) asparagine glycosylation is present at Asn87. The chain crosses the membrane as a helical span at residues Ile144–Leu164. 2 consecutive short sequence motifs (ITIM motif) follow at residues Val225 to Leu230 and Ser255 to Ile260. Phosphotyrosine occurs at positions 227 and 257.

As to quaternary structure, interacts with SH2 domains of tyrosine-protein phosphatases PTPN6 and PTPN11. The interaction with PTPN6 is constitutive. Interacts with the SH2 domain of CSK. Binds with high affinity to extracellular matrix collagens, the interaction is functionally important. In terms of processing, phosphorylation at Tyr-227 and Tyr-257 activates it. May be phosphorylated by LCK. N-glycosylated. Expressed in lymphoid and non-lymphoid organs.

It localises to the membrane. Functions as an inhibitory receptor that plays a constitutive negative regulatory role on cytolytic function of natural killer (NK) cells, B-cells and T-cells. Activation by Tyr phosphorylation results in recruitment and activation of the phosphatases PTPN6 and PTPN11. It also reduces the increase of intracellular calcium evoked by B-cell receptor ligation. May also play its inhibitory role independently of SH2-containing phosphatases. Modulates cytokine production in CD4+ T-cells, down-regulating IL2 and IFNG production while inducing secretion of transforming growth factor beta. Also down-regulates IgG and IgE production in B-cells as well as IL8, IL10 and TNF secretion. Inhibits proliferation and induces apoptosis in myeloid leukemia cell lines as well as prevents nuclear translocation of NF-kappa-B p65 subunit/RELA and phosphorylation of I-kappa-B alpha/CHUK in these cells. Inhibits the differentiation of peripheral blood precursors towards dendritic cells. The chain is Leukocyte-associated immunoglobulin-like receptor 1 (Lair1) from Rattus norvegicus (Rat).